Reading from the N-terminus, the 532-residue chain is MTDPAPLTRALLSVSDKTGLIEFATDLSSRGVELLSTGGTAKALREAGLDVRDVSEVTGFPEMMDGRVKTLHPMIHGGLLALRDNDAHVAAMKEHGIGAIDLLVVNLYPFEATVAAGADYDTCIENIDIGGPAMIRAAAKNHGAVTVLTDSSQYAGLLSELDANANKGGGTSFQFRQRMAQAAYGRTAAYDAAVSSWMAGAAEIKTPPHRAFAGSLAQEMRYGENPHQKAAFYLDGSSRPGVATAQQHQGKALSYNNINDTDAAFELVSEFAPDDGPAVAIIKHANPSGVARGNSLAEAYKAAFDCDRTSAFGGIVALNQTLDAATAEEIVQIFTEVVIAPDADEDAKAIFAAKKNLRLLTTGGLPDPRAPMVAYKQVAGGLLVQDKDTGHVDPELLEVVTKRAPSAQELADLRFAWTVAKHTKSNAIIYAKGGATVGIGAGQMSRVDSSTIAALKAARMGTECGMADTPAKGSVVASDAFFPFADGLLAAAEAGATAVIQPGGSMRDADVIAAADEAGLAMVFTGMRHFRH.

The MGS-like domain occupies 1-149; the sequence is MTDPAPLTRA…KNHGAVTVLT (149 aa).

This sequence belongs to the PurH family.

It carries out the reaction (6R)-10-formyltetrahydrofolate + 5-amino-1-(5-phospho-beta-D-ribosyl)imidazole-4-carboxamide = 5-formamido-1-(5-phospho-D-ribosyl)imidazole-4-carboxamide + (6S)-5,6,7,8-tetrahydrofolate. The enzyme catalyses IMP + H2O = 5-formamido-1-(5-phospho-D-ribosyl)imidazole-4-carboxamide. The protein operates within purine metabolism; IMP biosynthesis via de novo pathway; 5-formamido-1-(5-phospho-D-ribosyl)imidazole-4-carboxamide from 5-amino-1-(5-phospho-D-ribosyl)imidazole-4-carboxamide (10-formyl THF route): step 1/1. Its pathway is purine metabolism; IMP biosynthesis via de novo pathway; IMP from 5-formamido-1-(5-phospho-D-ribosyl)imidazole-4-carboxamide: step 1/1. The polypeptide is Bifunctional purine biosynthesis protein PurH (Jannaschia sp. (strain CCS1)).